The chain runs to 580 residues: Type II methyltransferase M.BanIII (580 aa).

The protein belongs to the N(4)/N(6)-methyltransferase family.

The catalysed reaction is a 2'-deoxyadenosine in DNA + S-adenosyl-L-methionine = an N(6)-methyl-2'-deoxyadenosine in DNA + S-adenosyl-L-homocysteine + H(+). Its function is as follows. A gamma subtype methylase, recognizes the double-stranded sequence 5'-ATCGAT-3', methylates A-5 on both strands, and protects the DNA from cleavage by the BanIII endonuclease. In Aneurinibacillus aneurinilyticus (Bacillus aneurinolyticus), this protein is Type II methyltransferase M.BanIII (banIIIM).